Reading from the N-terminus, the 194-residue chain is Flagellin A2 (194 aa).

Residues 1–12 (MFEFITDEDERG) constitute a propeptide that is removed on maturation.

The protein belongs to the archaeal flagellin family. In terms of processing, glycosylated.

Its subcellular location is the archaeal flagellum. In terms of biological role, flagellin is the subunit protein which polymerizes to form the filaments of archaeal flagella. In Halobacterium salinarum (strain ATCC 700922 / JCM 11081 / NRC-1) (Halobacterium halobium), this protein is Flagellin A2 (flaA2).